A 335-amino-acid chain; its full sequence is Biotin synthase (335 aa).

Residues 43 to 269 enclose the Radical SAM core domain; the sequence is YFGKKVKLNM…INPTKEIRIA (227 aa). Residues Cys61, Cys65, and Cys68 each coordinate [4Fe-4S] cluster. Positions 104, 137, 197, and 267 each coordinate [2Fe-2S] cluster.

It belongs to the radical SAM superfamily. Biotin synthase family. As to quaternary structure, homodimer. It depends on [4Fe-4S] cluster as a cofactor. [2Fe-2S] cluster serves as cofactor.

It catalyses the reaction (4R,5S)-dethiobiotin + (sulfur carrier)-SH + 2 reduced [2Fe-2S]-[ferredoxin] + 2 S-adenosyl-L-methionine = (sulfur carrier)-H + biotin + 2 5'-deoxyadenosine + 2 L-methionine + 2 oxidized [2Fe-2S]-[ferredoxin]. The protein operates within cofactor biosynthesis; biotin biosynthesis; biotin from 7,8-diaminononanoate: step 2/2. Functionally, catalyzes the conversion of dethiobiotin (DTB) to biotin by the insertion of a sulfur atom into dethiobiotin via a radical-based mechanism. This is Biotin synthase from Staphylococcus aureus (strain USA300).